A 251-amino-acid polypeptide reads, in one-letter code: Haloacid dehalogenase-like hydrolase domain-containing protein 3 (251 aa).

Lysine 15 is modified (N6-acetyllysine; alternate). Lysine 15 is modified (N6-succinyllysine; alternate). At lysine 130 the chain carries N6-acetyllysine.

This sequence belongs to the HAD-like hydrolase superfamily.

The protein is Haloacid dehalogenase-like hydrolase domain-containing protein 3 (HDHD3) of Bos taurus (Bovine).